Consider the following 102-residue polypeptide: Large ribosomal subunit protein uL23c (102 aa).

Belongs to the universal ribosomal protein uL23 family. Part of the 50S ribosomal subunit.

It is found in the plastid. The protein resides in the chloroplast. Binds to 23S rRNA. This chain is Large ribosomal subunit protein uL23c (rpl23), found in Phaeodactylum tricornutum (strain CCAP 1055/1).